The sequence spans 205 residues: HTH-type transcriptional regulator PksA (205 aa).

An HTH tetR-type domain is found at 8-68 (EKRRKQIAEA…FAMKLVQEKV (61 aa)). A DNA-binding region (H-T-H motif) is located at residues 31 to 50 (SARNIAKEAGLSLGALRHYF).

Functionally, transcriptional regulation of the polyketide synthase operon. In Bacillus subtilis (strain 168), this protein is HTH-type transcriptional regulator PksA (pksA).